Reading from the N-terminus, the 294-residue chain is Deubiquitinase OTUD6B (294 aa).

A disordered region spans residues 85 to 120; it reads VTSLDLGSEEPVQQPRVSKAQKRREKKAAQEKERDD. Positions 111 to 120 are enriched in basic and acidic residues; it reads KAAQEKERDD. The OTU domain occupies 150 to 287; it reads LQIRQIPSDG…GEHYNSVEQL (138 aa). Positions 155 to 161 are cys-loop; the sequence is IPSDGHC. D158 is a catalytic residue. The active-site Nucleophile is the C161. The tract at residues 222–232 is variable-loop; sequence IVNTPAWGGQL. Residues 270–280 form a his-loop region; it reads YMRHAYGLGEH. The active site involves H280.

The enzyme catalyses Thiol-dependent hydrolysis of ester, thioester, amide, peptide and isopeptide bonds formed by the C-terminal Gly of ubiquitin (a 76-residue protein attached to proteins as an intracellular targeting signal).. Its function is as follows. Deubiquitinating enzyme that may play a role in the ubiquitin-dependent regulation of different cellular processes. The sequence is that of Deubiquitinase OTUD6B (otud6b) from Xenopus laevis (African clawed frog).